We begin with the raw amino-acid sequence, 346 residues long: Histone PARylation factor 1 (346 aa).

The residue at position 1 (Met1) is an N-acetylmethionine. The disordered stretch occupies residues 1–23 (MVGGGGKRRPGGEGPQCEKTTDV). Residue Lys19 is modified to N6-acetyllysine. At Ser97 the chain carries ADP-ribosylserine. N6-acetyllysine occurs at positions 186 and 233. At Asp235 the chain carries PolyADP-ribosyl aspartic acid. Residue Tyr238 is modified to ADP-ribosyltyrosine. At Glu240 the chain carries PolyADP-ribosyl glutamic acid. Positions 242 to 346 (PETDADLKRI…SQENIDQLAA (105 aa)) are interaction with PARP1. Residue Glu284 is the Proton donor of the active site.

Belongs to the HPF1 family. In terms of assembly, interacts with PARP1 (via the PARP catalytic domain). Interacts with PARP2 (via the PARP catalytic domain). Interacts with core nucleosomes in a PARP1- and PARP2-dependent manner.

It localises to the chromosome. The protein resides in the nucleus. Functionally, cofactor for serine ADP-ribosylation that confers serine specificity on PARP1 and PARP2 and plays a key role in DNA damage response. Initiates the repair of double-strand DNA breaks: recruited to DNA damage sites by PARP1 and PARP2 and switches the amino acid specificity of PARP1 and PARP2 from aspartate or glutamate to serine residues, licensing serine ADP-ribosylation of target proteins. Serine ADP-ribosylation of target proteins, such as histones, promotes decompaction of chromatin and the recruitment of repair factors leading to the reparation of DNA strand breaks. Serine ADP-ribosylation of proteins constitutes the primary form of ADP-ribosylation of proteins in response to DNA damage. HPF1 acts by completing the active site of PARP1 and PARP2: forms a composite active site composed of residues from HPF1 and PARP1 or PARP2. While HPF1 promotes the initiation of serine ADP-ribosylation, it restricts the polymerase activity of PARP1 and PARP2 in order to limit the length of poly-ADP-ribose chains. HPF1 also promotes tyrosine ADP-ribosylation, probably by conferring tyrosine specificity on PARP1. In Homo sapiens (Human), this protein is Histone PARylation factor 1.